We begin with the raw amino-acid sequence, 638 residues long: Threonine--tRNA ligase (638 aa).

Residues 1–63 form the TGS domain; it reads MVMIQIELPD…TESGRLEIIT (63 aa). The interval 245 to 536 is catalytic; the sequence is DHRRIGRELD…LIEHYAGNFP (292 aa). 3 residues coordinate Zn(2+): C337, H388, and H513.

This sequence belongs to the class-II aminoacyl-tRNA synthetase family. In terms of assembly, homodimer. The cofactor is Zn(2+).

Its subcellular location is the cytoplasm. The enzyme catalyses tRNA(Thr) + L-threonine + ATP = L-threonyl-tRNA(Thr) + AMP + diphosphate + H(+). Functionally, catalyzes the attachment of threonine to tRNA(Thr) in a two-step reaction: L-threonine is first activated by ATP to form Thr-AMP and then transferred to the acceptor end of tRNA(Thr). Also edits incorrectly charged L-seryl-tRNA(Thr). The polypeptide is Threonine--tRNA ligase (Syntrophotalea carbinolica (strain DSM 2380 / NBRC 103641 / GraBd1) (Pelobacter carbinolicus)).